Consider the following 89-residue polypeptide: Cell division topological specificity factor (89 aa).

The protein belongs to the MinE family.

Functionally, prevents the cell division inhibition by proteins MinC and MinD at internal division sites while permitting inhibition at polar sites. This ensures cell division at the proper site by restricting the formation of a division septum at the midpoint of the long axis of the cell. The chain is Cell division topological specificity factor from Photorhabdus laumondii subsp. laumondii (strain DSM 15139 / CIP 105565 / TT01) (Photorhabdus luminescens subsp. laumondii).